We begin with the raw amino-acid sequence, 107 residues long: UPF0235 protein RPC_0058 (107 aa).

The protein belongs to the UPF0235 family.

This is UPF0235 protein RPC_0058 from Rhodopseudomonas palustris (strain BisB18).